Consider the following 180-residue polypeptide: 6,7-dimethyl-8-ribityllumazine synthase (180 aa).

5-amino-6-(D-ribitylamino)uracil contacts are provided by residues Phe23, 61-63, and 85-87; these read SFE and AVI. Residue 90–91 coordinates (2S)-2-hydroxy-3-oxobutyl phosphate; that stretch reads QT. The active-site Proton donor is His93. Position 118 (Phe118) interacts with 5-amino-6-(D-ribitylamino)uracil. Residue Arg132 coordinates (2S)-2-hydroxy-3-oxobutyl phosphate.

Belongs to the DMRL synthase family.

It carries out the reaction (2S)-2-hydroxy-3-oxobutyl phosphate + 5-amino-6-(D-ribitylamino)uracil = 6,7-dimethyl-8-(1-D-ribityl)lumazine + phosphate + 2 H2O + H(+). Its pathway is cofactor biosynthesis; riboflavin biosynthesis; riboflavin from 2-hydroxy-3-oxobutyl phosphate and 5-amino-6-(D-ribitylamino)uracil: step 1/2. Functionally, catalyzes the formation of 6,7-dimethyl-8-ribityllumazine by condensation of 5-amino-6-(D-ribitylamino)uracil with 3,4-dihydroxy-2-butanone 4-phosphate. This is the penultimate step in the biosynthesis of riboflavin. The sequence is that of 6,7-dimethyl-8-ribityllumazine synthase from Gloeobacter violaceus (strain ATCC 29082 / PCC 7421).